Consider the following 727-residue polypeptide: Synaptic vesicle glycoprotein 2C (727 aa).

Positions 1-57 are interaction with SYT1; it reads MEDSYKDRTSLMKGAKDIAKEVKKQTVKKVNQAVDRAQDEYTQRSYSRFQDEEDDDD. Over 1–154 the chain is Cytoplasmic; the sequence is MEDSYKDRTS…CGHGRFQWAL (154 aa). Residues 22–128 are disordered; sequence VKKQTVKKVN…DRRELESERR (107 aa). 2 positions are modified to phosphoserine: Ser75 and Ser76. Thr79 is modified (phosphothreonine). Residues 113–128 are compositionally biased toward basic and acidic residues; the sequence is KGDEYKDRRELESERR. The helical transmembrane segment at 155 to 175 threads the bilayer; that stretch reads FFVLGMALMADGVEVFVVGFV. The Extracellular segment spans residues 176 to 191; it reads LPSAETDLCIPNSGSG. A helical membrane pass occupies residues 192 to 212; the sequence is WLGSIVYLGMMVGAFFWGGLA. Residues 213–226 are Cytoplasmic-facing; it reads DKVGRKQSLLICMS. The chain crosses the membrane as a helical span at residues 227–247; it reads VNGFFAFLSSFVQGYGFFLVC. Arg248 is a topological domain (extracellular). The helical transmembrane segment at 249–269 threads the bilayer; the sequence is LLSGFGIGGAIPTVFSYFAEV. Residues 270-280 lie on the Cytoplasmic side of the membrane; the sequence is LAREKRGEHLS. Residues 281 to 301 traverse the membrane as a helical segment; it reads WLCMFWMIGGIYASAMAWAII. The Extracellular segment spans residues 302–320; sequence PHYGWSFSMGSAYQFHSWR. Residues 321 to 341 traverse the membrane as a helical segment; the sequence is VFVIVCALPCVSSVVALTFMP. Topologically, residues 342 to 437 are cytoplasmic; that stretch reads ESPRFLLEVG…PVRENTIKLT (96 aa). A helical membrane pass occupies residues 438-458; sequence IVWFTLSFGYYGLSVWFPDVI. The Extracellular segment spans residues 459–578; the sequence is KHLQSDEYAL…CQITFDDDYS (120 aa). Position 466 is a phosphotyrosine (Tyr466). Asn480, Asn484, Asn534, Asn559, and Asn565 each carry an N-linked (GlcNAc...) asparagine glycan. A helical transmembrane segment spans residues 579–599; sequence AYWIYFVNFLGTLAVLPGNIV. Over 600–609 the chain is Cytoplasmic; sequence SALLMDRIGR. A helical membrane pass occupies residues 610 to 630; it reads LTMLGGSMVLSGISCFFLWFG. The Extracellular portion of the chain corresponds to 631–636; it reads TSESMM. Residues 637-657 traverse the membrane as a helical segment; the sequence is IGMLCLYNGLTISAWNSLDVV. At 658–670 the chain is on the cytoplasmic side; the sequence is TVELYPTDRRATG. A helical transmembrane segment spans residues 671 to 693; sequence FGFLNALCKAAAVLGNLIFGSLV. The Extracellular segment spans residues 694 to 697; that stretch reads SITK. The helical transmembrane segment at 698–716 threads the bilayer; that stretch reads AIPILLASTVLVCGGLVGL. Topologically, residues 717-727 are cytoplasmic; the sequence is RLPDTRTQVLM.

Belongs to the major facilitator superfamily. As to quaternary structure, interacts with SYT1 in a calcium-dependent manner. (Microbial infection) Interacts with C.botulinum neurotoxin type A (BoNT/A, botA). In terms of assembly, (Microbial infection) Interacts with C.botulinum neurotoxin type D (BoNT/D, botD). In terms of processing, N-glycosylated. Expressed in specific subsets of conventional synapses in the retina (at protein level). Expressed in diaphragm motor nerve terminals (at protein level). Expressed in a subset of hippocampus neurons (at protein level).

The protein resides in the cytoplasmic vesicle. It localises to the secretory vesicle. It is found in the synaptic vesicle membrane. In terms of biological role, plays a role in the control of regulated secretion in neural and endocrine cells, enhancing selectively low-frequency neurotransmission. Positively regulates vesicle fusion by maintaining the readily releasable pool of secretory vesicles. Functionally, (Microbial infection) Receptor for C.botulinum neurotoxin type A (BoNT/A, botA); the toxin binds Sv2c via extracellular loop 4. Its function is as follows. (Microbial infection) Possible receptor for C.botulinum neurotoxin type D (BoNT/D, botD). This Mus musculus (Mouse) protein is Synaptic vesicle glycoprotein 2C (Sv2c).